Consider the following 492-residue polypeptide: Serine/threonine-protein kinase 3 (492 aa).

One can recognise a Protein kinase domain in the interval 26–277; sequence FDVLEKLGEG…ATQLLQHPFI (252 aa). ATP is bound by residues 32–40 and Lys-55; that span reads LGEGSYGSV. The active-site Proton acceptor is the Asp-145. Residue Thr-179 is modified to Phosphothreonine; by autocatalysis. Coiled coils occupy residues 286-328 and 443-476; these read LRDL…TMVK and NLDF…AKRQ. A compositionally biased stretch (basic and acidic residues) spans 297-307; sequence KAKRQQEQQRE. The interval 297 to 339 is disordered; the sequence is KAKRQQEQQRELEEDDENSEEEVEVDSHTMVKSGSESAGTMRA. A compositionally biased stretch (acidic residues) spans 308–320; sequence LEEDDENSEEEVE. The segment covering 326–339 has biased composition (polar residues); that stretch reads MVKSGSESAGTMRA. Residues 438 to 485 form the SARAH domain; that stretch reads FDFLKNLDFEELQMRLTALDPMMEREIEELRQRYTAKRQPILDAMDAK.

Belongs to the protein kinase superfamily. STE Ser/Thr protein kinase family. STE20 subfamily. As to quaternary structure, homodimer; mediated via the coiled-coil region. Requires Mg(2+) as cofactor.

The protein localises to the cytoplasm. It localises to the nucleus. The catalysed reaction is L-seryl-[protein] + ATP = O-phospho-L-seryl-[protein] + ADP + H(+). It carries out the reaction L-threonyl-[protein] + ATP = O-phospho-L-threonyl-[protein] + ADP + H(+). With respect to regulation, inhibited by the C-terminal non-catalytic region. Activated by caspase-cleavage. Full activation also requires homodimerization and autophosphorylation of Thr-179. In terms of biological role, stress-activated, pro-apoptotic kinase which, following caspase-cleavage, enters the nucleus and induces chromatin condensation followed by internucleosomal DNA fragmentation. Key component of the Hippo signaling pathway which plays a pivotal role in organ size control and tumor suppression by restricting proliferation and promoting apoptosis. The core of this pathway is composed of a kinase cascade wherein stk3/mst2 and stk4/mst1, in complex with its regulatory protein sav1, phosphorylates and activates lats1/2 in complex with its regulatory protein mob1, which in turn phosphorylates and inactivates yap1 oncoprotein and wwtr1/taz. Phosphorylation of yap1 by lats2 inhibits its translocation into the nucleus to regulate cellular genes important for cell proliferation, cell death, and cell migration. This is Serine/threonine-protein kinase 3 (stk3) from Danio rerio (Zebrafish).